Consider the following 312-residue polypeptide: Secreted RxLR effector protein 14 (312 aa).

The first 20 residues, 1-20, serve as a signal peptide directing secretion; it reads MHSFKLLLALIVAICTSCDA. The RxLR-dEER signature appears at 46–61; the sequence is RLLRAKDGKVRADEER.

It belongs to the RxLR effector family.

The protein localises to the secreted. It localises to the host nucleus. In terms of biological role, secreted effector that completely suppresses the host cell death induced by cell death-inducing proteins. The sequence is that of Secreted RxLR effector protein 14 from Plasmopara viticola (Downy mildew of grapevine).